We begin with the raw amino-acid sequence, 210 residues long: Fimbriae Z protein (210 aa).

Residues 5 to 121 (SVIIMDTHPI…DIFHAVQMIL (117 aa)) form the Response regulatory domain. The residue at position 56 (Asp56) is a 4-aspartylphosphate. One can recognise an HTH luxR-type domain in the interval 143–208 (NSSTVTVLSN…ELIDYAKLYE (66 aa)). The segment at residues 167–186 (NKEIADKLLLSNKTVSAHKS) is a DNA-binding region (H-T-H motif).

The protein localises to the cytoplasm. The sequence is that of Fimbriae Z protein (fimZ) from Escherichia coli O157:H7.